We begin with the raw amino-acid sequence, 249 residues long: Phosphate import ATP-binding protein PstB (249 aa).

Residues 5–244 (LRIEDLHFWY…PEKDRTEAYV (240 aa)) enclose the ABC transporter domain. Residue 37–44 (GPSGCGKS) participates in ATP binding.

It belongs to the ABC transporter superfamily. Phosphate importer (TC 3.A.1.7) family. As to quaternary structure, the complex is composed of two ATP-binding proteins (PstB), two transmembrane proteins (PstC and PstA) and a solute-binding protein (PstS).

It localises to the cell inner membrane. It catalyses the reaction phosphate(out) + ATP + H2O = ADP + 2 phosphate(in) + H(+). Its function is as follows. Part of the ABC transporter complex PstSACB involved in phosphate import. Responsible for energy coupling to the transport system. This Salinibacter ruber (strain DSM 13855 / M31) protein is Phosphate import ATP-binding protein PstB.